The primary structure comprises 742 residues: Photosystem I P700 chlorophyll a apoprotein A2 (742 aa).

Helical transmembrane passes span 46–69, 135–158, 175–199, 273–291, 336–359, 375–401, 423–445, and 525–543; these read LFST…FHIA, LFQA…LHLQ, LNHH…HVAI, IAHH…GHMY, LHFQ…QHMG, SALY…IFFV, ALIS…IYVH, and FLVH…LILI. [4Fe-4S] cluster contacts are provided by cysteine 567 and cysteine 576. Transmembrane regions (helical) follow at residues 583-604 and 651-673; these read AMYL…YWHW and LSPW…MFLI. Divinyl chlorophyll a contacts are provided by histidine 662, methionine 670, and tyrosine 678. Phylloquinone is bound at residue tryptophan 679. Residues 715 to 735 traverse the membrane as a helical segment; it reads LVGLAHFTIGNILTFGAFVIA.

It belongs to the PsaA/PsaB family. As to quaternary structure, the PsaA/B heterodimer binds the P700 divinyl chlorophyll special pair and subsequent electron acceptors. PSI consists of a core antenna complex that captures photons, and an electron transfer chain that converts photonic excitation into a charge separation. The cyanobacterial PSI reaction center is composed of one copy each of PsaA,B,C,D,E,F,I,J,K,L,M and X, and forms trimeric complexes. Requires PSI electron transfer chain: 5 divinyl chlorophyll a, 1 divinyl chlorophyll a', 2 phylloquinones and 3 4Fe-4S clusters. PSI core antenna: 90 divinyl chlorophyll a, 22 carotenoids, 3 phospholipids and 1 galactolipid. P700 is a divinyl chlorophyll a/divinyl chlorophyll a' dimer, A0 is one or more divinyl chlorophyll a, A1 is one or both phylloquinones and FX is a shared 4Fe-4S iron-sulfur center. as cofactor.

The protein localises to the cellular thylakoid membrane. It catalyses the reaction reduced [plastocyanin] + hnu + oxidized [2Fe-2S]-[ferredoxin] = oxidized [plastocyanin] + reduced [2Fe-2S]-[ferredoxin]. In terms of biological role, psaA and PsaB bind P700, the primary electron donor of photosystem I (PSI), as well as the electron acceptors A0, A1 and FX. PSI is a plastocyanin/cytochrome c6-ferredoxin oxidoreductase, converting photonic excitation into a charge separation, which transfers an electron from the donor P700 chlorophyll pair to the spectroscopically characterized acceptors A0, A1, FX, FA and FB in turn. Oxidized P700 is reduced on the lumenal side of the thylakoid membrane by plastocyanin or cytochrome c6. In Prochlorococcus marinus (strain MIT 9301), this protein is Photosystem I P700 chlorophyll a apoprotein A2.